The sequence spans 872 residues: Alanine--tRNA ligase (872 aa).

His567, His571, Cys669, and His673 together coordinate Zn(2+).

Belongs to the class-II aminoacyl-tRNA synthetase family. Zn(2+) serves as cofactor.

The protein localises to the cytoplasm. The enzyme catalyses tRNA(Ala) + L-alanine + ATP = L-alanyl-tRNA(Ala) + AMP + diphosphate. Its function is as follows. Catalyzes the attachment of alanine to tRNA(Ala) in a two-step reaction: alanine is first activated by ATP to form Ala-AMP and then transferred to the acceptor end of tRNA(Ala). Also edits incorrectly charged Ser-tRNA(Ala) and Gly-tRNA(Ala) via its editing domain. This Streptococcus mutans serotype c (strain ATCC 700610 / UA159) protein is Alanine--tRNA ligase.